The chain runs to 710 residues: Polyribonucleotide nucleotidyltransferase (710 aa).

Mg(2+) contacts are provided by Asp-486 and Asp-492. The KH domain occupies 553–612 (PRFETIKIHPDKIRDIIGKGGATIRSITEETNSSIDIDDDGTVKVYADDNEALQAALNRI). Residues 622–690 (GAIYEGTVVR…QRGRIKLSIK (69 aa)) form the S1 motif domain.

This sequence belongs to the polyribonucleotide nucleotidyltransferase family. As to quaternary structure, component of the RNA degradosome, which is a multiprotein complex involved in RNA processing and mRNA degradation. Mg(2+) is required as a cofactor.

The protein localises to the cytoplasm. The enzyme catalyses RNA(n+1) + phosphate = RNA(n) + a ribonucleoside 5'-diphosphate. Functionally, involved in mRNA degradation. Catalyzes the phosphorolysis of single-stranded polyribonucleotides processively in the 3'- to 5'-direction. This chain is Polyribonucleotide nucleotidyltransferase, found in Cellvibrio japonicus (strain Ueda107) (Pseudomonas fluorescens subsp. cellulosa).